Reading from the N-terminus, the 339-residue chain is DNA-directed RNA polymerase subunit alpha (339 aa).

The segment at 1-235 (MVIQKNWQEL…DQLQIFVNFE (235 aa)) is alpha N-terminal domain (alpha-NTD). An alpha C-terminal domain (alpha-CTD) region spans residues 251-339 (FNPALLKKVD…DLAKRFEEHY (89 aa)).

Belongs to the RNA polymerase alpha chain family. In terms of assembly, homodimer. The RNAP catalytic core consists of 2 alpha, 1 beta, 1 beta' and 1 omega subunit. When a sigma factor is associated with the core the holoenzyme is formed, which can initiate transcription.

It catalyses the reaction RNA(n) + a ribonucleoside 5'-triphosphate = RNA(n+1) + diphosphate. Its function is as follows. DNA-dependent RNA polymerase catalyzes the transcription of DNA into RNA using the four ribonucleoside triphosphates as substrates. This Methylobacterium nodulans (strain LMG 21967 / CNCM I-2342 / ORS 2060) protein is DNA-directed RNA polymerase subunit alpha.